Reading from the N-terminus, the 501-residue chain is Glycine betaine/proline/ectoine/pipecolic acid transporter OusA (501 aa).

At 1-38 the chain is on the cytoplasmic side; that stretch reads MKLKRKRVKPIALDDVTIIDDGRLRKAITAAALGNAME. The chain crosses the membrane as a helical span at residues 39–59; the sequence is WFDFGVYGFVAYALGQVFFPG. The Periplasmic portion of the chain corresponds to 60 to 66; that stretch reads ADPGVQM. The helical transmembrane segment at 67 to 87 threads the bilayer; it reads IAALATFSVPFLIRPLGGVFF. Residues 88–98 are Cytoplasmic-facing; the sequence is GALGDKYGRQK. A helical transmembrane segment spans residues 99–119; the sequence is ILAITIIIMSISTFCIGLIPS. Residues 120–122 are Periplasmic-facing; sequence YER. A helical transmembrane segment spans residues 123–143; the sequence is IGIWAPILLLLAKMAQGFSVG. The Cytoplasmic portion of the chain corresponds to 144–170; that stretch reads GEYTGASIFVAEYSPDRKRGFMGSWLD. The chain crosses the membrane as a helical span at residues 171 to 191; that stretch reads FGSIAGFVLGAGVVVLISTLI. Residues 192 to 195 are Periplasmic-facing; that stretch reads GEQA. A helical membrane pass occupies residues 196 to 216; it reads FLAWGWRLPFFLALPLGLIGL. At 217 to 261 the chain is on the cytoplasmic side; that stretch reads YLRHALEETPAFRQHVEKLEQNDRDGLKAGPGVSFREIATHHWKS. A helical transmembrane segment spans residues 262–282; the sequence is LLVCIGLVIATNVTYYMLLTY. Residues 283 to 298 lie on the Periplasmic side of the membrane; sequence MPSYLSHSLHYSENHG. The helical transmembrane segment at 299–319 threads the bilayer; it reads VLIIIAIMIGMLFVQPVMGLL. At 320–326 the chain is on the cytoplasmic side; that stretch reads SDRFGRK. Residues 327 to 347 traverse the membrane as a helical segment; sequence PFVVIGSVAMFFLAVPSFMLI. Residues 348–350 are Periplasmic-facing; the sequence is NSD. A helical membrane pass occupies residues 351–371; sequence IIGLIFLGLLMLAVILNAFTG. At 372–391 the chain is on the cytoplasmic side; the sequence is VMASTLPALFPTHIRYSALA. Residues 392–412 traverse the membrane as a helical segment; it reads SAFNISVLIAGLTPTVAAWLV. At 413–417 the chain is on the periplasmic side; the sequence is ESSQN. The helical transmembrane segment at 418-438 threads the bilayer; sequence LYMPAYYLMVIAVIGLLTGLF. Residues 439-501 are Cytoplasmic-facing; sequence MKETANKPLK…LVAQHPRIND (63 aa). Residues 461–495 adopt a coiled-coil conformation; sequence KEILQEHHDNIEHKIEDITQQIAELEAKRQLLVAQ.

It belongs to the major facilitator superfamily. Sugar transporter (TC 2.A.1.1) family.

Its subcellular location is the cell inner membrane. Its function is as follows. Involved in uptake and accumulation of various osmoprotectants. Allows the uptake of glycine betaine, proline, ectoine, and pipecolic acid. May be a contributory factor in the infection progression within the host. This Dickeya dadantii (strain 3937) (Erwinia chrysanthemi (strain 3937)) protein is Glycine betaine/proline/ectoine/pipecolic acid transporter OusA.